The following is a 446-amino-acid chain: Probable glycine dehydrogenase (decarboxylating) subunit 1 (446 aa).

This sequence belongs to the GcvP family. N-terminal subunit subfamily. As to quaternary structure, the glycine cleavage system is composed of four proteins: P, T, L and H. In this organism, the P 'protein' is a heterodimer of two subunits.

It carries out the reaction N(6)-[(R)-lipoyl]-L-lysyl-[glycine-cleavage complex H protein] + glycine + H(+) = N(6)-[(R)-S(8)-aminomethyldihydrolipoyl]-L-lysyl-[glycine-cleavage complex H protein] + CO2. In terms of biological role, the glycine cleavage system catalyzes the degradation of glycine. The P protein binds the alpha-amino group of glycine through its pyridoxal phosphate cofactor; CO(2) is released and the remaining methylamine moiety is then transferred to the lipoamide cofactor of the H protein. This is Probable glycine dehydrogenase (decarboxylating) subunit 1 from Desulforamulus reducens (strain ATCC BAA-1160 / DSM 100696 / MI-1) (Desulfotomaculum reducens).